A 410-amino-acid polypeptide reads, in one-letter code: Exopolygalacturonase (410 aa).

The N-terminal stretch at Met-1 to Gly-22 is a signal peptide. N-linked (GlcNAc...) asparagine glycans are attached at residues Asn-89 and Asn-201. PbH1 repeat units follow at residues Cys-192–Asp-218, Ser-219–Pro-240, Thr-242–Ser-262, Val-272–Ala-293, and Ala-337–Asp-377. Asp-233 (proton donor) is an active-site residue. Cys-235 and Cys-252 form a disulfide bridge. Asn-246 carries an N-linked (GlcNAc...) asparagine glycan. Residue His-256 is part of the active site. Asn-349 is a glycosylation site (N-linked (GlcNAc...) asparagine). Residues Cys-364 and Cys-370 are joined by a disulfide bond. A glycan (N-linked (GlcNAc...) asparagine) is linked at Asn-387. Residues Cys-393 and Cys-409 are joined by a disulfide bond.

The protein belongs to the glycosyl hydrolase 28 family. In terms of tissue distribution, pollen.

Its subcellular location is the secreted. The protein localises to the cell wall. The enzyme catalyses [(1-&gt;4)-alpha-D-galacturonosyl](n) + H2O = alpha-D-galacturonate + [(1-&gt;4)-alpha-D-galacturonosyl](n-1). Its function is as follows. May function in depolymerizing pectin during pollen development, germination, and tube growth. Acts as an exo-polygalacturonase. This chain is Exopolygalacturonase (PG2C), found in Zea mays (Maize).